The sequence spans 397 residues: Phosphoglycerate kinase (397 aa).

Substrate is bound by residues 21 to 23 (DFN), Arg36, 59 to 62 (HCGR), Arg118, and Arg151. ATP is bound by residues Lys201, Glu323, and 353 to 356 (GGDT).

This sequence belongs to the phosphoglycerate kinase family. Monomer.

It localises to the cytoplasm. The catalysed reaction is (2R)-3-phosphoglycerate + ATP = (2R)-3-phospho-glyceroyl phosphate + ADP. Its pathway is carbohydrate degradation; glycolysis; pyruvate from D-glyceraldehyde 3-phosphate: step 2/5. This is Phosphoglycerate kinase from Bartonella quintana (strain Toulouse) (Rochalimaea quintana).